The chain runs to 83 residues: Large ribosomal subunit protein bL27 (83 aa).

Residues 1-21 form a disordered region; sequence MAHKRSSGAGRNGRDSNPKYL.

It belongs to the bacterial ribosomal protein bL27 family.

In Kosmotoga olearia (strain ATCC BAA-1733 / DSM 21960 / TBF 19.5.1), this protein is Large ribosomal subunit protein bL27.